Consider the following 163-residue polypeptide: Phosphopantetheine adenylyltransferase (163 aa).

Serine 11 contacts substrate. ATP contacts are provided by residues serine 11–phenylalanine 12 and histidine 19. Lysine 43, leucine 75, and arginine 89 together coordinate substrate. Residues glycine 90–arginine 92, glutamate 100, and tyrosine 125–serine 131 contribute to the ATP site.

This sequence belongs to the bacterial CoaD family. As to quaternary structure, homohexamer. It depends on Mg(2+) as a cofactor.

The protein localises to the cytoplasm. It catalyses the reaction (R)-4'-phosphopantetheine + ATP + H(+) = 3'-dephospho-CoA + diphosphate. The protein operates within cofactor biosynthesis; coenzyme A biosynthesis; CoA from (R)-pantothenate: step 4/5. Functionally, reversibly transfers an adenylyl group from ATP to 4'-phosphopantetheine, yielding dephospho-CoA (dPCoA) and pyrophosphate. This is Phosphopantetheine adenylyltransferase from Lysinibacillus sphaericus (strain C3-41).